Here is a 54-residue protein sequence, read N- to C-terminus: Large ribosomal subunit protein bL33A (54 aa).

It belongs to the bacterial ribosomal protein bL33 family.

The sequence is that of Large ribosomal subunit protein bL33A from Mycobacteroides abscessus (strain ATCC 19977 / DSM 44196 / CCUG 20993 / CIP 104536 / JCM 13569 / NCTC 13031 / TMC 1543 / L948) (Mycobacterium abscessus).